Here is a 390-residue protein sequence, read N- to C-terminus: Glucose-fructose oxidoreductase domain-containing protein 1 (390 aa).

Residues 1–21 (MLPGVGVFGTSLTSRVIIPLL) form the signal peptide. Residues Asn161, Asn270, and Asn354 are each glycosylated (N-linked (GlcNAc...) asparagine).

The protein belongs to the Gfo/Idh/MocA family. In terms of assembly, homodimer.

It is found in the secreted. Its function is as follows. Probably catalytically inactive enzyme. Does not bind NAD or NADP. The protein is Glucose-fructose oxidoreductase domain-containing protein 1 (gfod1) of Xenopus tropicalis (Western clawed frog).